A 494-amino-acid chain; its full sequence is Glutamyl-tRNA(Gln) amidotransferase subunit A (494 aa).

Active-site charge relay system residues include lysine 80 and serine 155. The active-site Acyl-ester intermediate is the serine 179.

This sequence belongs to the amidase family. GatA subfamily. Heterotrimer of A, B and C subunits.

It catalyses the reaction L-glutamyl-tRNA(Gln) + L-glutamine + ATP + H2O = L-glutaminyl-tRNA(Gln) + L-glutamate + ADP + phosphate + H(+). Its function is as follows. Allows the formation of correctly charged Gln-tRNA(Gln) through the transamidation of misacylated Glu-tRNA(Gln) in organisms which lack glutaminyl-tRNA synthetase. The reaction takes place in the presence of glutamine and ATP through an activated gamma-phospho-Glu-tRNA(Gln). The sequence is that of Glutamyl-tRNA(Gln) amidotransferase subunit A from Lachnoclostridium phytofermentans (strain ATCC 700394 / DSM 18823 / ISDg) (Clostridium phytofermentans).